Consider the following 54-residue polypeptide: Ovomucoid (54 aa).

Residues 4–54 (VDCSDYPKPVCSPENMPVCGSDSKTYSNKCDFCNAVADSNGTLTLSHFGKC) enclose the Kazal-like domain. 3 disulfide bridges follow: Cys6-Cys36, Cys14-Cys33, and Cys22-Cys54. Asn43 is a glycosylation site (N-linked (GlcNAc...) asparagine).

Its subcellular location is the secreted. The protein is Ovomucoid of Nycticorax nycticorax (Black-crowned night-heron).